Reading from the N-terminus, the 366-residue chain is Protein FAM131A (366 aa).

Residues 342–366 (QRQASDLASSGVVSLDEDEAEPEEQ) form a disordered region. The segment covering 356–366 (LDEDEAEPEEQ) has biased composition (acidic residues).

The protein belongs to the FAM131 family.

The protein is Protein FAM131A (FAM131A) of Homo sapiens (Human).